A 165-amino-acid polypeptide reads, in one-letter code: Type 3 secretion system regulator YopR (165 aa).

Positions 2 to 11 are 5' secretion signal; that stretch reads TVTLNRGSIT. The segment at 131-149 is 3' secretion signal; the sequence is PYLSELINKELMILLPYNS.

This sequence belongs to the YopR family.

The protein resides in the secreted. May be involved in the regulation of the assembly of the type III secretion system (T3SS), also called injectisome, which is used to inject bacterial effector proteins into eukaryotic host cells. May control the secretion and/or polymerization of YscF/SctF, the principal component of the needle filament, thereby impacting the assembly of the T3SS. Involved in pathogenesis. Essential for the establishment of Yersinia infections in a mouse model system. The polypeptide is Type 3 secretion system regulator YopR (Yersinia enterocolitica).